Consider the following 727-residue polypeptide: Zinc metalloproteinase nas-38 (727 aa).

The first 25 residues, 1–25 (MPSPSYNRHIIIASCFCCLLIFSSA), serve as a signal peptide directing secretion. Positions 26–114 (ARVPKASKKH…FTQGKREKRK (89 aa)) are excised as a propeptide. The 200-residue stretch at 113-312 (RKIGRNPLYK…QAINMAYGCT (200 aa)) folds into the Peptidase M12A domain. 2 cysteine pairs are disulfide-bonded: cysteine 158–cysteine 311 and cysteine 179–cysteine 199. Histidine 207 serves as a coordination point for Zn(2+). Glutamate 208 is an active-site residue. Residues histidine 211 and histidine 217 each contribute to the Zn(2+) site. Residues 306–345 (NMAYGCTESCADLPCLRNGYTHPNNCSMCACPEGLSGRYC) form the EGF-like domain. N-linked (GlcNAc...) asparagine glycosylation occurs at asparagine 330. In terms of domain architecture, CUB spans 353-469 (AQCGGVIFAT…AGFKAKFWSN (117 aa)). 2 disulfide bridges follow: cysteine 355–cysteine 383 and cysteine 411–cysteine 432. Disordered regions lie at residues 473 to 506 (PEGVSTPLPPTTAPLPEISETTQKPEPTTVQSTT) and 532 to 561 (TPLTSSSTTTESTTVSSTTQSTTWLPTEPS). Residues 535–554 (TSSSTTTESTTVSSTTQSTT) show a composition bias toward low complexity. The region spanning 610 to 658 (ECGCGAWSEWQGECSQQCGGCGHRLRKRECKKEACRKEEKRPCNFSACP) is the TSP type-1 domain. Intrachain disulfides connect cysteine 611–cysteine 644, cysteine 623–cysteine 652, cysteine 627–cysteine 657, and cysteine 639–cysteine 644. Asparagine 653 and asparagine 714 each carry an N-linked (GlcNAc...) asparagine glycan.

Requires Zn(2+) as cofactor. Expressed in the epidermis, the excretory canal cell, duct cell, pore cell, and excretory gland cell. Expressed in an oscillating pattern in epithelial cells with increased expression during the lethargus phase which occurs during molting between larval and adult stages. Not expressed in seam cells or in the RIS neuron.

The protein localises to the secreted. Metalloprotease. As part of the innate immune response to molting and injury to the adult epidermis, positively regulates the activity of the transcription factor sta-2 to promote the expression of epidermal antimicrobial peptides such as nlp-29. Through regulating the expression of epidermal antimicrobial peptides such as nlp-29, modulates sleep duration and locomotion quiescence during the sleep-like state called lethargus which occurs during molting between larval and adult stages. This may occur through the sleep-active RIS neuron. This is Zinc metalloproteinase nas-38 from Caenorhabditis elegans.